The sequence spans 144 residues: Large ribosomal subunit protein uL15 (144 aa).

The interval 1-55 (MQLNELKPVAGSRFKRLRKGRGLSSGHGFTSGRGTKGQKAHGKTRLGFEGGQMPL) is disordered. Residues 23–35 (LSSGHGFTSGRGT) show a composition bias toward gly residues.

Belongs to the universal ribosomal protein uL15 family. Part of the 50S ribosomal subunit.

In terms of biological role, binds to the 23S rRNA. The sequence is that of Large ribosomal subunit protein uL15 from Limosilactobacillus fermentum (strain NBRC 3956 / LMG 18251) (Lactobacillus fermentum).